The chain runs to 353 residues: Type 2 DNA topoisomerase 6 subunit A (353 aa).

Residues 2–138 (NRREIAINKL…LGLMPEEDGA (137 aa)) enclose the Topo IIA-type catalytic domain. The O-(5'-phospho-DNA)-tyrosine intermediate role is filled by Tyr-96. Mg(2+) contacts are provided by Glu-186 and Asp-238.

It belongs to the TOP6A family. In terms of assembly, homodimer. Heterotetramer of two Top6A and two Top6B chains. The cofactor is Mg(2+).

The enzyme catalyses ATP-dependent breakage, passage and rejoining of double-stranded DNA.. Functionally, relaxes both positive and negative superturns and exhibits a strong decatenase activity. This Methanothermobacter thermautotrophicus (strain ATCC 29096 / DSM 1053 / JCM 10044 / NBRC 100330 / Delta H) (Methanobacterium thermoautotrophicum) protein is Type 2 DNA topoisomerase 6 subunit A.